Here is a 702-residue protein sequence, read N- to C-terminus: Kinesin-like protein KIF3A (702 aa).

The Kinesin motor domain occupies 14–345; it reads NVKVVVRCRP…LRYANRAKNI (332 aa). 100-107 contacts ATP; that stretch reads GQTGTGKT. Residues 355–593 adopt a coiled-coil conformation; sequence PKDALLRQFQ…LSRELRLQML (239 aa). Disordered stretches follow at residues 372–424 and 667–702; these read KKLE…KMIE and LMKLERPRTSKGKARPKTGRRKRSAKPETVIDSLLQ. Acidic residues predominate over residues 376–400; that stretch reads EGEEISGSDISGSEEDDDEEGEIGE. A compositionally biased stretch (basic and acidic residues) spans 410-424; sequence DQAGKKKVSPDKMIE. Positions 600 to 702 are globular; sequence PRDYQEMIEN…PETVIDSLLQ (103 aa). Residues 675–690 are compositionally biased toward basic residues; that stretch reads TSKGKARPKTGRRKRS. The residue at position 690 (Ser-690) is a Phosphoserine.

This sequence belongs to the TRAFAC class myosin-kinesin ATPase superfamily. Kinesin family. Kinesin II subfamily. In terms of assembly, heterodimer of KIF3A and KIF3B. Interacts with CIMAP3. Interacts with CLN3. Interacts with DCTN1. Interacts with FLCN. Interacts with AP3B1.

It localises to the cytoplasm. Its subcellular location is the cytoskeleton. The protein localises to the cell projection. It is found in the cilium. The protein resides in the microtubule organizing center. It localises to the centrosome. Its subcellular location is the centriole. In terms of biological role, microtubule-based anterograde translocator for membranous organelles. Plus end-directed microtubule sliding activity in vitro. Plays a role in primary cilia formation. Plays a role in centriole cohesion and subdistal appendage organization and function. Regulates the formation of the subdistal appendage via recruitment of DCTN1 to the centriole. Also required for ciliary basal feet formation and microtubule anchoring to mother centriole. The chain is Kinesin-like protein KIF3A (KIF3A) from Pongo abelii (Sumatran orangutan).